A 598-amino-acid chain; its full sequence is UvrABC system protein C (598 aa).

A GIY-YIG domain is found at 14–91 (DSPGCYLHKD…IQKNMPKYNI (78 aa)). Residues 196 to 231 (DKIIEDLRSKMLAASEEMAFERAAEYRDLISGIATM) enclose the UVR domain.

Belongs to the UvrC family. Interacts with UvrB in an incision complex.

It is found in the cytoplasm. In terms of biological role, the UvrABC repair system catalyzes the recognition and processing of DNA lesions. UvrC both incises the 5' and 3' sides of the lesion. The N-terminal half is responsible for the 3' incision and the C-terminal half is responsible for the 5' incision. The protein is UvrABC system protein C of Streptococcus pyogenes serotype M3 (strain ATCC BAA-595 / MGAS315).